The following is an 802-amino-acid chain: Copper-exporting P-type ATPase (802 aa).

HMA domains lie at 5–71 (KEIA…YHVV) and 73–139 (EKAE…YKLK). Cys16, Cys19, Cys84, and Cys87 together coordinate Cu(+). The next 6 helical transmembrane spans lie at 162 to 181 (LIFS…SHFT), 196 to 218 (WMQF…VGAY), 230 to 249 (VLVA…LTFQ), 259 to 278 (GLYY…GKLF), 412 to 434 (ISGI…WYLW), and 447 to 469 (FIAV…SIMA). The active-site 4-aspartylphosphate intermediate is the Asp499. 2 residues coordinate Mg(2+): Asp698 and Asp702. The next 2 membrane-spanning stretches (helical) occupy residues 756-775 (LFWA…LGFL) and 779-796 (IAGA…LNAL).

This sequence belongs to the cation transport ATPase (P-type) (TC 3.A.3) family. Type IB subfamily. As to quaternary structure, monomer at sub-stoichiometric copper concentrations. Homodimer at higher copper concentrations. Forms a heterodimer (electrostatic interactions) with CopZ during the transfer of Cu(+).

It is found in the cell membrane. The catalysed reaction is Cu(+)(in) + ATP + H2O = Cu(+)(out) + ADP + phosphate + H(+). Functionally, involved in copper export. This chain is Copper-exporting P-type ATPase (copA), found in Bacillus subtilis (strain 168).